We begin with the raw amino-acid sequence, 557 residues long: Ras-specific guanine nucleotide-releasing factor RalGPS2 (557 aa).

One can recognise a Ras-GEF domain in the interval 49-287 (TPEEYAGQIT…YKLSLKIEPG (239 aa)). The tract at residues 283 to 314 (KIEPGTSTPRSAASREDLVGPEVGASPQSGRK) is disordered. 4 positions are modified to phosphoserine: Ser-293, Ser-296, Ser-308, and Ser-311. At Thr-326 the chain carries Phosphothreonine. Positions 327 to 330 (PPSP) match the PXXP motif. Ser-329 and Ser-343 each carry phosphoserine. A Phosphothreonine modification is found at Thr-361. Residues 368 to 409 (RHLLDDSVMEPHAPSRGQAESSTLSSGISIGSSDGSELSEET) form a disordered region. A Phosphoserine modification is found at Ser-374. Positions 387 to 403 (ESSTLSSGISIGSSDGS) are enriched in low complexity. Residues 431–543 (AVTIQGVLRR…WFKHLSAACQ (113 aa)) form the PH domain. The interval 433-557 (TIQGVLRRKT…QVPTNLMTFE (125 aa)) is required for stimulation of nucleotide exchange by RALA.

As to quaternary structure, interacts with the SH3 domains of GRB2 and PLCG1. Interacts with RALA.

It localises to the cytoplasm. The protein resides in the cell membrane. In terms of biological role, guanine nucleotide exchange factor for the small GTPase RALA. May be involved in cytoskeletal organization. May also be involved in the stimulation of transcription in a Ras-independent fashion. This is Ras-specific guanine nucleotide-releasing factor RalGPS2 (RALGPS2) from Macaca fascicularis (Crab-eating macaque).